The following is a 930-amino-acid chain: Isoleucine--tRNA ligase (930 aa).

Residues 1–21 are disordered; sequence MRVKDTLNLGKTKFPMRGRLP. The short motif at 57 to 67 is the 'HIGH' region element; that stretch reads PYANGPIHIGH. Glu555 is a binding site for L-isoleucyl-5'-AMP. The 'KMSKS' region motif lies at 596–600; sequence KMSKS. Lys599 is a binding site for ATP. Positions 889, 892, 909, and 912 each coordinate Zn(2+).

It belongs to the class-I aminoacyl-tRNA synthetase family. IleS type 1 subfamily. In terms of assembly, monomer. Zn(2+) is required as a cofactor.

It localises to the cytoplasm. It catalyses the reaction tRNA(Ile) + L-isoleucine + ATP = L-isoleucyl-tRNA(Ile) + AMP + diphosphate. In terms of biological role, catalyzes the attachment of isoleucine to tRNA(Ile). As IleRS can inadvertently accommodate and process structurally similar amino acids such as valine, to avoid such errors it has two additional distinct tRNA(Ile)-dependent editing activities. One activity is designated as 'pretransfer' editing and involves the hydrolysis of activated Val-AMP. The other activity is designated 'posttransfer' editing and involves deacylation of mischarged Val-tRNA(Ile). This chain is Isoleucine--tRNA ligase, found in Limosilactobacillus fermentum (strain NBRC 3956 / LMG 18251) (Lactobacillus fermentum).